We begin with the raw amino-acid sequence, 817 residues long: Leucine--tRNA ligase (817 aa).

The 'HIGH' region motif lies at 51–61; that stretch reads PYPSGDLHVGH. The 'KMSKS' region signature appears at 588 to 592; that stretch reads RMSKS. Residue K591 participates in ATP binding.

Belongs to the class-I aminoacyl-tRNA synthetase family.

The protein localises to the cytoplasm. It carries out the reaction tRNA(Leu) + L-leucine + ATP = L-leucyl-tRNA(Leu) + AMP + diphosphate. The sequence is that of Leucine--tRNA ligase from Rubrobacter xylanophilus (strain DSM 9941 / JCM 11954 / NBRC 16129 / PRD-1).